A 130-amino-acid chain; its full sequence is Small ribosomal subunit protein uS9 (130 aa).

Belongs to the universal ribosomal protein uS9 family.

In Paraburkholderia phymatum (strain DSM 17167 / CIP 108236 / LMG 21445 / STM815) (Burkholderia phymatum), this protein is Small ribosomal subunit protein uS9.